Consider the following 358-residue polypeptide: 5,10-methenyltetrahydromethanopterin hydrogenase (358 aa).

Belongs to the HMD family. Homotetramer.

The catalysed reaction is 5,10-methenyl-5,6,7,8-tetrahydromethanopterin + H2 = 5,10-methylenetetrahydromethanopterin + H(+). Its pathway is one-carbon metabolism; methanogenesis from CO(2); 5,10-methylene-5,6,7,8-tetrahydromethanopterin from 5,10-methenyl-5,6,7,8-tetrahydromethanopterin (hydrogen route): step 1/1. With respect to regulation, activity requires salt; 100 mM potassium phosphate, potassium chloride, and sodium chloride are equally effective. Functionally, catalyzes the reversible reduction of methenyl-H(4)MPT(+) to methylene-H(4)MPT. The sequence is that of 5,10-methenyltetrahydromethanopterin hydrogenase from Methanopyrus kandleri (strain AV19 / DSM 6324 / JCM 9639 / NBRC 100938).